A 446-amino-acid polypeptide reads, in one-letter code: Tubulin beta chain (446 aa).

Residues Gln11, Glu69, Ser138, Gly142, Thr143, Gly144, Asn204, and Asn226 each coordinate GTP. Glu69 serves as a coordination point for Mg(2+). Residues 423-446 (QQYQDAGVDEEEEEYEEEPLPEDE) are disordered. The span at 429-446 (GVDEEEEEYEEEPLPEDE) shows a compositional bias: acidic residues.

Belongs to the tubulin family. As to quaternary structure, dimer of alpha and beta chains. A typical microtubule is a hollow water-filled tube with an outer diameter of 25 nm and an inner diameter of 15 nM. Alpha-beta heterodimers associate head-to-tail to form protofilaments running lengthwise along the microtubule wall with the beta-tubulin subunit facing the microtubule plus end conferring a structural polarity. Microtubules usually have 13 protofilaments but different protofilament numbers can be found in some organisms and specialized cells. Mg(2+) serves as cofactor.

The protein resides in the cytoplasm. It is found in the cytoskeleton. Tubulin is the major constituent of microtubules, a cylinder consisting of laterally associated linear protofilaments composed of alpha- and beta-tubulin heterodimers. Microtubules grow by the addition of GTP-tubulin dimers to the microtubule end, where a stabilizing cap forms. Below the cap, tubulin dimers are in GDP-bound state, owing to GTPase activity of alpha-tubulin. This Pestalotiopsis microspora protein is Tubulin beta chain (TUBB).